Reading from the N-terminus, the 224-residue chain is Claudin-19 (224 aa).

The Cytoplasmic segment spans residues 1–7 (MANSGLQ). Residues 8 to 28 (LLGYFLALGGWVGIIASTALP) traverse the membrane as a helical segment. Over 29-81 (QWKQSSYAGDAIITAVGLYEGLWMSCASQSTGQVQCKLYDSLLALDGHIQSAR) the chain is Extracellular. Cysteines 54 and 64 form a disulfide. Residues 82-102 (ALMVVAVLLGFVAMVLSVVGM) traverse the membrane as a helical segment. The Cytoplasmic portion of the chain corresponds to 103 to 117 (KCTRVGDSNPTAKGR). Residues 118-138 (VAISGGALFLLAGLCTLTAVS) form a helical membrane-spanning segment. Residues 139–160 (WYATLVTQEFFNPSTPVNARYE) are Extracellular-facing. The helical transmembrane segment at 161–181 (FGPALFVGWASAGLAILGGSF) threads the bilayer. Over 182–224 (LCCTCPEPERANSIPQPYRSGPSTAAREPVVKLSTSVKGPLGV) the chain is Cytoplasmic.

It belongs to the claudin family. In terms of assembly, can form homo- and heteropolymeric tight junction strands. Interacts with other claudins including CLDN3, CLDN10, CLDN16 and CLDN18 with highest affinity for CLDN16. Interacts (via PDZ-binding motif TRV) with TJP1 (via PDZ domain).

The protein localises to the cell junction. It localises to the tight junction. Its subcellular location is the cell membrane. The catalysed reaction is Mg(2+)(in) = Mg(2+)(out). It catalyses the reaction Ca(2+)(in) = Ca(2+)(out). The enzyme catalyses Na(+)(in) = Na(+)(out). It carries out the reaction K(+)(in) = K(+)(out). The catalysed reaction is Rb(+)(in) = Rb(+)(out). It catalyses the reaction Cs(+)(in) = Cs(+)(out). The enzyme catalyses Li(+)(in) = Li(+)(out). Its function is as follows. Forms paracellular channels: coassembles with CLDN16 into tight junction strands with cation-selective channels through the strands, conveying epithelial permeability in a process known as paracellular tight junction permeability. Involved in the maintenance of ion gradients along the nephron. In the thick ascending limb (TAL) of Henle's loop, facilitates sodium paracellular permeability from the interstitial compartment to the lumen, contributing to the lumen-positive transepithelial potential that drives paracellular magnesium and calcium reabsorption. Forms paracellular barriers on its own. In the peripheral nervous system, represents a major constituent of the tight junctions in Schwann cells and contributes to electrical sealing. During retinal neurogenesis, may regulate the barrier properties of tight junctions in retinal pigment epithelium, required for proper retinal tissue differentiation and vision. This Rattus norvegicus (Rat) protein is Claudin-19.